Consider the following 245-residue polypeptide: 8-amino-3,8-dideoxy-manno-octulosonate cytidylyltransferase (245 aa).

The protein belongs to the KdsB family.

It is found in the cytoplasm. The catalysed reaction is 8-amino-3,8-dideoxy-alpha-D-manno-octulosonate + CTP = CMP-8-amino-3,8-dideoxy-alpha-D-manno-oct-2-ulosonate + diphosphate. It functions in the pathway bacterial outer membrane biogenesis; lipopolysaccharide biosynthesis. Activates KDO8N (a required 8-carbon sugar) for incorporation into bacterial lipopolysaccharide in the Shewanella genus. This chain is 8-amino-3,8-dideoxy-manno-octulosonate cytidylyltransferase, found in Shewanella sp. (strain MR-7).